The chain runs to 425 residues: Septin-7 (425 aa).

One can recognise a Septin-type G domain in the interval arginine 28–alanine 297. A G1 motif region spans residues glycine 38–serine 45. GTP-binding positions include glycine 38–serine 45, threonine 71, glycine 97, lysine 176–glutamate 184, glycine 231, and arginine 246. The interval aspartate 94–glycine 97 is G3 motif. The interval alanine 175–aspartate 178 is G4 motif. Residues leucine 324–lysine 421 adopt a coiled-coil conformation.

The protein belongs to the TRAFAC class TrmE-Era-EngA-EngB-Septin-like GTPase superfamily. Septin GTPase family. In terms of assembly, monomer, and homodimer. Nucleotide binding promotes oligomerization. Can form heterooligomers with other family members and form filaments.

Its subcellular location is the cytoplasm. It localises to the chromosome. It is found in the centromere. The protein resides in the kinetochore. The protein localises to the cytoskeleton. Its subcellular location is the spindle. It localises to the cleavage furrow. It is found in the midbody. The protein resides in the cilium axoneme. Its function is as follows. Filament-forming cytoskeletal GTPase. Required for normal organization of the actin cytoskeleton. Required for normal progress through mitosis. Involved in cytokinesis. Plays a role in ciliogenesis and collective cell movements including convergent extension during gastrulation. Controls cell elongation but not polarization during convergent extension. In Xenopus laevis (African clawed frog), this protein is Septin-7.